Consider the following 156-residue polypeptide: Ribosomal RNA large subunit methyltransferase H (156 aa).

S-adenosyl-L-methionine is bound by residues Leu-73, Gly-104, and Leu-123–Leu-128.

Belongs to the RNA methyltransferase RlmH family. Homodimer.

It is found in the cytoplasm. The catalysed reaction is pseudouridine(1915) in 23S rRNA + S-adenosyl-L-methionine = N(3)-methylpseudouridine(1915) in 23S rRNA + S-adenosyl-L-homocysteine + H(+). Specifically methylates the pseudouridine at position 1915 (m3Psi1915) in 23S rRNA. This Ralstonia nicotianae (strain ATCC BAA-1114 / GMI1000) (Ralstonia solanacearum) protein is Ribosomal RNA large subunit methyltransferase H.